The following is a 592-amino-acid chain: A-type ATP synthase subunit A (592 aa).

236–243 (GPFGSGKT) is an ATP binding site.

Belongs to the ATPase alpha/beta chains family. As to quaternary structure, has multiple subunits with at least A(3), B(3), C, D, E, F, H, I and proteolipid K(x).

It is found in the cell membrane. The catalysed reaction is ATP + H2O + 4 H(+)(in) = ADP + phosphate + 5 H(+)(out). Functionally, component of the A-type ATP synthase that produces ATP from ADP in the presence of a proton gradient across the membrane. The A chain is the catalytic subunit. The chain is A-type ATP synthase subunit A from Methanopyrus kandleri (strain AV19 / DSM 6324 / JCM 9639 / NBRC 100938).